The chain runs to 411 residues: LL-diaminopimelate aminotransferase (411 aa).

Y15 and G42 together coordinate substrate. Pyridoxal 5'-phosphate contacts are provided by residues Y72, 105-106 (SK), Y129, N186, Y217, and 245-247 (SFS). 3 residues coordinate substrate: K106, Y129, and N186. N6-(pyridoxal phosphate)lysine is present on K248. Residues R256 and N287 each coordinate pyridoxal 5'-phosphate. N287 and R382 together coordinate substrate.

This sequence belongs to the class-I pyridoxal-phosphate-dependent aminotransferase family. LL-diaminopimelate aminotransferase subfamily. Homodimer. Pyridoxal 5'-phosphate serves as cofactor.

The enzyme catalyses (2S,6S)-2,6-diaminopimelate + 2-oxoglutarate = (S)-2,3,4,5-tetrahydrodipicolinate + L-glutamate + H2O + H(+). It participates in amino-acid biosynthesis; L-lysine biosynthesis via DAP pathway; LL-2,6-diaminopimelate from (S)-tetrahydrodipicolinate (aminotransferase route): step 1/1. Functionally, involved in the synthesis of meso-diaminopimelate (m-DAP or DL-DAP), required for both lysine and peptidoglycan biosynthesis. Catalyzes the direct conversion of tetrahydrodipicolinate to LL-diaminopimelate. Is also able to use meso-diaminopimelate, lysine or ornithine as substrates. The sequence is that of LL-diaminopimelate aminotransferase from Protochlamydia amoebophila (strain UWE25).